Consider the following 296-residue polypeptide: Nitrogenase iron protein 1 (296 aa).

11–18 lines the ATP pocket; the sequence is GKGGIGKS. Cys99 is a [4Fe-4S] cluster binding site. At Arg102 the chain carries ADP-ribosylarginine; by dinitrogenase reductase ADP-ribosyltransferase. Cys133 is a [4Fe-4S] cluster binding site.

This sequence belongs to the NifH/BchL/ChlL family. In terms of assembly, homodimer. The cofactor is [4Fe-4S] cluster. In terms of processing, the reversible ADP-ribosylation of Arg-102 inactivates the nitrogenase reductase and regulates nitrogenase activity.

The enzyme catalyses N2 + 8 reduced [2Fe-2S]-[ferredoxin] + 16 ATP + 16 H2O = H2 + 8 oxidized [2Fe-2S]-[ferredoxin] + 2 NH4(+) + 16 ADP + 16 phosphate + 6 H(+). Its function is as follows. The key enzymatic reactions in nitrogen fixation are catalyzed by the nitrogenase complex, which has 2 components: the iron protein and the molybdenum-iron protein. The sequence is that of Nitrogenase iron protein 1 (nifH1) from Azorhizobium caulinodans (strain ATCC 43989 / DSM 5975 / JCM 20966 / LMG 6465 / NBRC 14845 / NCIMB 13405 / ORS 571).